The following is a 165-amino-acid chain: Protein phosphatase 1 regulatory subunit 14C (165 aa).

A compositionally biased stretch (low complexity) spans 1–12 (MSVATGSSETAG). Residues 1-73 (MSVATGSSET…QRRHQQGKVT (73 aa)) are disordered. Serine 2 is subject to N-acetylserine. Serine 25 is subject to Phosphoserine. Arginine 27 carries the omega-N-methylarginine modification. Position 33 is a phosphoserine (serine 33). The segment covering 35–63 (GSSSGSGSSREDSAPVATAAAAGQVQQQQ) has biased composition (low complexity). Position 73 is a phosphothreonine; by ILK1 (threonine 73).

The protein belongs to the PP1 inhibitor family. Has over 600-fold higher inhibitory activity when phosphorylated, creating a molecular switch for regulating the phosphorylation status of PPP1CA substrates and smooth muscle contraction. The main inhibitory site appears to be Thr-73. As to expression, detected in breast cancer.

It is found in the cytoplasm. The protein resides in the membrane. Inhibitor of the PP1 regulatory subunit PPP1CA. This is Protein phosphatase 1 regulatory subunit 14C (PPP1R14C) from Homo sapiens (Human).